Consider the following 31-residue polypeptide: Palustrin-2a (31 aa).

C23 and C29 are oxidised to a cystine.

Expressed by the skin glands.

It is found in the secreted. Its function is as follows. Antimicrobial activity against Gram-negative bacterium E.coli. This chain is Palustrin-2a, found in Lithobates palustris (Pickerel frog).